The following is a 1029-amino-acid chain: Protein STABILIZED1 (1029 aa).

Residues M1 to G85 enclose the Ubiquitin-like domain. A Glycyl lysine isopeptide (Gly-Lys) (interchain with K-? in acceptor proteins) cross-link involves residue G85. The disordered stretch occupies residues A142–D170. Residues D210–K243 are a coiled coil. 15 HAT repeats span residues Y367 to V399, G401 to A431, N432 to H462, D463 to E494, D496 to Y524, E526 to A554, G639 to S671, G673 to L705, G707 to E739, K741 to E772, G774 to R806, K808 to K840, N842 to R874, D876 to R908, and K940 to Q972. The stretch at K625–K658 is one TPR 1 repeat. Residues F794–C827 form a TPR 2 repeat. A TPR 3 repeat occupies P926 to I959.

In terms of assembly, component of a pre-mRNA splicing complex. Interacts with ZOP1. Interacts with PRP31. Ubiquitous.

It localises to the nucleus. The protein resides in the cajal body. Functionally, pre-mRNA splicing factor required for splicing and for the turnover of unstable transcripts. May be a U5 snRNP-associated protein involved in the formation of U4/U6-U5 tri-snRNP. Involved in responses to abiotic stresses. Involved in microRNAs (miRNAs) biogenesis by functioning in primary miRNAs (pri-miRNAs) splicing. Required for DNA methylation and transcriptional silencing through the RNA-directed DNA methylation (RdDM) pathway. This chain is Protein STABILIZED1 (STA1), found in Arabidopsis thaliana (Mouse-ear cress).